Consider the following 260-residue polypeptide: Phosphate import ATP-binding protein PstB (260 aa).

An ABC transporter domain is found at 14-255; that stretch reads LQIRNLDFFY…PGKKQTEDYI (242 aa). 46 to 53 provides a ligand contact to ATP; it reads GPSGCGKS.

Belongs to the ABC transporter superfamily. Phosphate importer (TC 3.A.1.7) family. In terms of assembly, the complex is composed of two ATP-binding proteins (PstB), two transmembrane proteins (PstC and PstA) and a solute-binding protein (PstS).

Its subcellular location is the cell inner membrane. The enzyme catalyses phosphate(out) + ATP + H2O = ADP + 2 phosphate(in) + H(+). Part of the ABC transporter complex PstSACB involved in phosphate import. Responsible for energy coupling to the transport system. In Thiobacillus denitrificans (strain ATCC 25259 / T1), this protein is Phosphate import ATP-binding protein PstB.